The sequence spans 283 residues: Nucleoid occlusion protein (283 aa).

A DNA-binding region (H-T-H motif) is located at residues 148–167 (EALAQRLGKGQSTIANKLRL).

It belongs to the ParB family.

The protein localises to the cytoplasm. Its subcellular location is the nucleoid. Its function is as follows. Effects nucleoid occlusion by binding relatively nonspecifically to DNA and preventing the assembly of the division machinery in the vicinity of the nucleoid, especially under conditions that disturb the cell cycle. It helps to coordinate cell division and chromosome segregation by preventing the formation of the Z ring through the nucleoid, which would cause chromosome breakage. The polypeptide is Nucleoid occlusion protein (Bacillus licheniformis (strain ATCC 14580 / DSM 13 / JCM 2505 / CCUG 7422 / NBRC 12200 / NCIMB 9375 / NCTC 10341 / NRRL NRS-1264 / Gibson 46)).